Here is a 618-residue protein sequence, read N- to C-terminus: Matrix metalloproteinase-24 (618 aa).

The first 41 residues, 1-41 (MPRSRGGRAAPGQAARWSGWRAPGRLLPLLPALCCLAAAAG), serve as a signal peptide directing secretion. A propeptide spanning residues 42–128 (AGKPAGADAP…HLSRRRRNKR (87 aa)) is cleaved from the precursor. The Extracellular segment spans residues 42–575 (AGKPAGADAP…IDDVPGSVNA (534 aa)). The Cysteine switch signature appears at 110 to 117 (PRCGVPDH). 2 residues coordinate Zn(2+): Cys112 and His255. The active site involves Glu256. Zn(2+) is bound by residues His259 and His265. A disordered region spans residues 296 to 352 (QKIYGPPAEPLEPTRPLPTLPVRRIHSPSERKHERQPRPPRPPLGDRPSTPGAKPNI). Pro residues predominate over residues 302–314 (PAEPLEPTRPLPT). Positions 322–332 (SPSERKHERQP) are enriched in basic and acidic residues. 4 Hemopexin repeats span residues 350-398 (PNIC…WKGL), 399-444 (PARI…GSCL), 446-494 (REGI…KGIP), and 495-542 (QAPQ…WMGC). The cysteines at positions 353 and 542 are disulfide-linked. A helical transmembrane segment spans residues 576-596 (VAVVVPCTLSLCLLVLLYTIF). The Cytoplasmic portion of the chain corresponds to 597–618 (QFKNKTGPQPVTYYKRPVQEWV). Positions 616–618 (EWV) match the PDZ-binding motif.

Belongs to the peptidase M10A family. As to quaternary structure, interacts (via PDZ-binding motif) with APBA3 (via PDZ domain). Interacts with GRIP1 and GRIP2. Zn(2+) serves as cofactor. Ca(2+) is required as a cofactor. Post-translationally, cleaved by a furin endopeptidase in the trans-Golgi network. As to expression, predominantly expressed in the nervous system: while enriched in the central nervous system, expression is also detected in the peripheral nervous system, including the trigeminal ganglion. Expression is not restricted to the nervous system: it is also enriched in the thymus, with a lower level of expression present in the aorta. In brain, high expression is present in the brain parenchyma, particularly within the neocortex.

Its subcellular location is the cell membrane. It localises to the golgi apparatus. The protein localises to the trans-Golgi network membrane. It is found in the secreted. The protein resides in the extracellular space. Its subcellular location is the extracellular matrix. Metalloprotease that mediates cleavage of N-cadherin (CDH2) and acts as a regulator of neuro-immune interactions and neural stem cell quiescence. Involved in cell-cell interactions between nociceptive neurites and mast cells, possibly by mediating cleavage of CDH2, thereby acting as a mediator of peripheral thermal nociception and inflammatory hyperalgesia. Key regulator of neural stem cells quiescence by mediating cleavage of CDH2, affecting CDH2-mediated anchorage of neural stem cells to ependymocytes in the adult subependymal zone, leading to modulate their quiescence. May play a role in axonal growth. Able to activate progelatinase A. May also be a proteoglycanase involved in degradation of proteoglycans, such as dermatan sulfate and chondroitin sulfate proteoglycans. Cleaves partially fibronectin, but not collagen type I, nor laminin. This Rattus norvegicus (Rat) protein is Matrix metalloproteinase-24 (Mmp24).